The primary structure comprises 840 residues: Sorting nexin-25 (840 aa).

The 164-residue stretch at 1 to 164 (MDRVLRDVFD…MLLRQLEYRE (164 aa)) folds into the PXA domain. The region spanning 287–401 (QFEDIMTNPF…LVSDLYEKLM (115 aa)) is the RGS domain. The segment at 404–437 (EEEEEPDAQLASEKDELGSGGEAGEEAVEGTSGV) is disordered. The stretch at 446-494 (IKLRELNEKLEYKRQALSSIQNAPKPDKKIISKLKDEILLIEKECTALQ) forms a coiled coil. Residues 508 to 628 (GLWRASITSA…AFLSPSPDYL (121 aa)) form the PX domain. Position 665 is a phosphoserine (Ser665).

Belongs to the sorting nexin family.

It is found in the endosome membrane. In terms of biological role, may be involved in several stages of intracellular trafficking. In Mus musculus (Mouse), this protein is Sorting nexin-25 (Snx25).